The following is a 183-amino-acid chain: Ribonuclease H (183 aa).

The region spanning 2 to 151 (SQARFIAFSD…VDQLAQAAAR (150 aa)) is the RNase H type-1 domain. 4 residues coordinate Mg(2+): Asp-11, Glu-57, Asp-79, and Asp-143.

Belongs to the RNase H family. Monomer. The cofactor is Mg(2+).

The protein localises to the cytoplasm. It catalyses the reaction Endonucleolytic cleavage to 5'-phosphomonoester.. Endonuclease that specifically degrades the RNA of RNA-DNA hybrids. This chain is Ribonuclease H, found in Anaeromyxobacter sp. (strain K).